The following is a 236-amino-acid chain: Alpha-S2-casein (236 aa).

The signal sequence occupies residues 1–15 (MKFFIFTCLLAVALA). Phosphoserine is present on residues Ser23, Ser24, Ser25, Ser28, Ser47, Ser80, Ser81, Ser82, Ser85, Ser157, and Ser169. The disordered stretch occupies residues 72-93 (PTEVYSSSSSSEESAKFPTERE). Residues 84–93 (ESAKFPTERE) are compositionally biased toward basic and acidic residues.

The protein belongs to the alpha-casein family. There are at least three different forms found in milk, with varying degrees of phosphorylation. These include form 10-P which is phosphorylated at ten sites that have not been determined, form 11-P which is phosphorylated at eleven sites and form 12-P which is phosphorylated at twelve sites. As to expression, mammary gland specific. Secreted in milk.

Its subcellular location is the secreted. Its function is as follows. Important role in the capacity of milk to transport calcium phosphate. The polypeptide is Alpha-S2-casein (Equus asinus (Donkey)).